We begin with the raw amino-acid sequence, 401 residues long: 8-amino-7-oxononanoate synthase (401 aa).

Arginine 24 contributes to the substrate binding site. 111-112 (GF) lines the pyridoxal 5'-phosphate pocket. Histidine 137 provides a ligand contact to substrate. Residues serine 183, histidine 211, and threonine 240 each coordinate pyridoxal 5'-phosphate. The residue at position 243 (lysine 243) is an N6-(pyridoxal phosphate)lysine. Threonine 357 provides a ligand contact to substrate.

This sequence belongs to the class-II pyridoxal-phosphate-dependent aminotransferase family. BioF subfamily. As to quaternary structure, homodimer. Requires pyridoxal 5'-phosphate as cofactor.

The enzyme catalyses 6-carboxyhexanoyl-[ACP] + L-alanine + H(+) = (8S)-8-amino-7-oxononanoate + holo-[ACP] + CO2. It functions in the pathway cofactor biosynthesis; biotin biosynthesis. In terms of biological role, catalyzes the decarboxylative condensation of pimeloyl-[acyl-carrier protein] and L-alanine to produce 8-amino-7-oxononanoate (AON), [acyl-carrier protein], and carbon dioxide. The chain is 8-amino-7-oxononanoate synthase from Xanthomonas axonopodis pv. citri (strain 306).